A 326-amino-acid chain; its full sequence is uncharacterized protein (326 aa).

Position 132 (Ser-132) interacts with substrate. The active-site Proton acceptor is Tyr-157.

It belongs to the NAD(P)-dependent epimerase/dehydratase family. dTDP-glucose dehydratase subfamily.

This is an uncharacterized protein from Methanocaldococcus jannaschii (strain ATCC 43067 / DSM 2661 / JAL-1 / JCM 10045 / NBRC 100440) (Methanococcus jannaschii).